Here is a 425-residue protein sequence, read N- to C-terminus: Threonine synthase (425 aa).

N6-(pyridoxal phosphate)lysine is present on lysine 105.

The protein belongs to the threonine synthase family. It depends on pyridoxal 5'-phosphate as a cofactor.

It carries out the reaction O-phospho-L-homoserine + H2O = L-threonine + phosphate. The protein operates within amino-acid biosynthesis; L-threonine biosynthesis; L-threonine from L-aspartate: step 5/5. Functionally, catalyzes the gamma-elimination of phosphate from L-phosphohomoserine and the beta-addition of water to produce L-threonine. This chain is Threonine synthase (thrC), found in Haemophilus influenzae (strain ATCC 51907 / DSM 11121 / KW20 / Rd).